A 776-amino-acid chain; its full sequence is Peregrinol diphosphate synthase CPS1, chloroplastic (776 aa).

The transit peptide at 1–17 (MASTPTLNLSITTPFVR) directs the protein to the chloroplast. Lys238 is a binding site for substrate. Residues Asp371 and Asp373 each coordinate Mg(2+). The DXDD motif signature appears at 371 to 374 (DIDD). Lys457 lines the substrate pocket.

This sequence belongs to the terpene synthase family. It depends on Mg(2+) as a cofactor. As to expression, present in both leaves and flowers, with higher levels in leaves.

Its subcellular location is the plastid. It is found in the chloroplast. It catalyses the reaction peregrinol diphosphate = (2E,6E,10E)-geranylgeranyl diphosphate + H2O. It participates in secondary metabolite biosynthesis; terpenoid biosynthesis. Functionally, involved in the biosynthesis of labdane-type diterpenoid including marrubiin and other labdane-related furanoid diterpenoids with potential applications as anti-diabetics, analgesics or vasorelaxants. Terpene synthase that produces peregrinol diphosphate from geranylgeranyl diphosphate (GGPP). This Marrubium vulgare (White horehound) protein is Peregrinol diphosphate synthase CPS1, chloroplastic.